Here is a 277-residue protein sequence, read N- to C-terminus: Urease accessory protein UreD (277 aa).

Belongs to the UreD family. UreD, UreF and UreG form a complex that acts as a GTP-hydrolysis-dependent molecular chaperone, activating the urease apoprotein by helping to assemble the nickel containing metallocenter of UreC. The UreE protein probably delivers the nickel.

It is found in the cytoplasm. Required for maturation of urease via the functional incorporation of the urease nickel metallocenter. This is Urease accessory protein UreD from Yersinia pestis (strain Pestoides F).